A 34-amino-acid chain; its full sequence is Photosystem II reaction center protein M (34 aa).

Residues 5–25 (ILGLIATALFIIIPTSFLLIL) traverse the membrane as a helical segment.

Belongs to the PsbM family. As to quaternary structure, PSII is composed of 1 copy each of membrane proteins PsbA, PsbB, PsbC, PsbD, PsbE, PsbF, PsbH, PsbI, PsbJ, PsbK, PsbL, PsbM, PsbT, PsbX, PsbY, PsbZ, Psb30/Ycf12, at least 3 peripheral proteins of the oxygen-evolving complex and a large number of cofactors. It forms dimeric complexes.

Its subcellular location is the plastid. It localises to the chloroplast thylakoid membrane. Its function is as follows. One of the components of the core complex of photosystem II (PSII). PSII is a light-driven water:plastoquinone oxidoreductase that uses light energy to abstract electrons from H(2)O, generating O(2) and a proton gradient subsequently used for ATP formation. It consists of a core antenna complex that captures photons, and an electron transfer chain that converts photonic excitation into a charge separation. This subunit is found at the monomer-monomer interface. The chain is Photosystem II reaction center protein M from Nephroselmis olivacea (Green alga).